A 480-amino-acid polypeptide reads, in one-letter code: Proline--tRNA ligase (480 aa).

The protein belongs to the class-II aminoacyl-tRNA synthetase family. ProS type 3 subfamily. In terms of assembly, homodimer.

Its subcellular location is the cytoplasm. It carries out the reaction tRNA(Pro) + L-proline + ATP = L-prolyl-tRNA(Pro) + AMP + diphosphate. Its function is as follows. Catalyzes the attachment of proline to tRNA(Pro) in a two-step reaction: proline is first activated by ATP to form Pro-AMP and then transferred to the acceptor end of tRNA(Pro). The sequence is that of Proline--tRNA ligase from Metallosphaera sedula (strain ATCC 51363 / DSM 5348 / JCM 9185 / NBRC 15509 / TH2).